Consider the following 116-residue polypeptide: Putative oxygen-evolving enhancer protein 1 (116 aa).

It belongs to the PsbO family.

It is found in the plastid. The protein resides in the chloroplast thylakoid membrane. Its function is as follows. Stabilizes the manganese cluster which is the primary site of water splitting. The sequence is that of Putative oxygen-evolving enhancer protein 1 from Pinus strobus (Eastern white pine).